The chain runs to 329 residues: Fructose-1,6-bisphosphatase class 1 (329 aa).

Mg(2+) contacts are provided by Glu84, Asp103, Leu105, and Asp106. Residues 106–109, Asn196, and Lys262 contribute to the substrate site; that span reads DGSS. Mg(2+) is bound at residue Glu268.

This sequence belongs to the FBPase class 1 family. In terms of assembly, homotetramer. Requires Mg(2+) as cofactor.

Its subcellular location is the cytoplasm. It carries out the reaction beta-D-fructose 1,6-bisphosphate + H2O = beta-D-fructose 6-phosphate + phosphate. Its pathway is carbohydrate biosynthesis; gluconeogenesis. The polypeptide is Fructose-1,6-bisphosphatase class 1 (Shewanella halifaxensis (strain HAW-EB4)).